The primary structure comprises 338 residues: MKVYYENDADLALLADKKIAVLGFGSQGHAHALNLKDSGMNVCVGLKENSASWVKAEKAGLMVEKTAEAVKWADIIMVLIPDQVQKAVYENDIAPNLKPGDTLAFGHGFNIHYKQIVPPANVNVIMIAPKSPGHLVRRTFVEGAGVPCLIAVHQNVDGKAKDIALAWAKGLGGTKAGVIETNFKDETETDLFGEQAVLCGGSAELIKAGFDTLVEGGYPAELAYFECMHELKLIVDLYYEGGLSRMNYSVSDTAEYGGMTRGPRIITDEVRQNMRQVLKEVQDGTFAKEFIDECNSGYKSMEALRKSNREHKIEGVGEKLRGMMSWLFKKNPKADAGV.

The region spanning 1-181 is the KARI N-terminal Rossmann domain; it reads MKVYYENDAD…GGTKAGVIET (181 aa). NADP(+)-binding positions include 24–27, Lys47, Ser50, Ser52, and 82–85; these read FGSQ and DQVQ. His107 is an active-site residue. Residue Gly133 participates in NADP(+) binding. The region spanning 182–327 is the KARI C-terminal knotted domain; sequence NFKDETETDL…EKLRGMMSWL (146 aa). Mg(2+)-binding residues include Asp190, Glu194, Glu226, and Glu230. Ser251 is a substrate binding site.

It belongs to the ketol-acid reductoisomerase family. It depends on Mg(2+) as a cofactor.

The catalysed reaction is (2R)-2,3-dihydroxy-3-methylbutanoate + NADP(+) = (2S)-2-acetolactate + NADPH + H(+). It catalyses the reaction (2R,3R)-2,3-dihydroxy-3-methylpentanoate + NADP(+) = (S)-2-ethyl-2-hydroxy-3-oxobutanoate + NADPH + H(+). The protein operates within amino-acid biosynthesis; L-isoleucine biosynthesis; L-isoleucine from 2-oxobutanoate: step 2/4. Its pathway is amino-acid biosynthesis; L-valine biosynthesis; L-valine from pyruvate: step 2/4. Involved in the biosynthesis of branched-chain amino acids (BCAA). Catalyzes an alkyl-migration followed by a ketol-acid reduction of (S)-2-acetolactate (S2AL) to yield (R)-2,3-dihydroxy-isovalerate. In the isomerase reaction, S2AL is rearranged via a Mg-dependent methyl migration to produce 3-hydroxy-3-methyl-2-ketobutyrate (HMKB). In the reductase reaction, this 2-ketoacid undergoes a metal-dependent reduction by NADPH to yield (R)-2,3-dihydroxy-isovalerate. The chain is Ketol-acid reductoisomerase (NADP(+)) from Chloroherpeton thalassium (strain ATCC 35110 / GB-78).